We begin with the raw amino-acid sequence, 299 residues long: Large ribosomal subunit protein uL29m (299 aa).

This sequence belongs to the universal ribosomal protein uL29 family. Component of the mitochondrial large ribosomal subunit. Mature mitochondrial ribosomes consist of a small (37S) and a large (54S) subunit. The 37S subunit contains at least 33 different proteins and 1 molecule of RNA (15S). The 54S subunit contains at least 45 different proteins and 1 molecule of RNA (21S).

Its subcellular location is the mitochondrion. The chain is Large ribosomal subunit protein uL29m (MRPL4) from Scheffersomyces stipitis (strain ATCC 58785 / CBS 6054 / NBRC 10063 / NRRL Y-11545) (Yeast).